A 378-amino-acid polypeptide reads, in one-letter code: Putative F-box only protein 15 (378 aa).

The 48-residue stretch at 5-52 (KRVYRSLPFELVEEILKKTPAESLNRFKSTCKQWYGIITSKRFMYNHL) folds into the F-box domain.

The sequence is that of Putative F-box only protein 15 (FBX15) from Arabidopsis thaliana (Mouse-ear cress).